Here is a 201-residue protein sequence, read N- to C-terminus: ATP synthase subunit b 2 (201 aa).

Residues 1–17 show a composition bias toward polar residues; sequence MAEQKNPLTTPSPNADT. The segment at 1–39 is disordered; the sequence is MAEQKNPLTTPSPNADTTIVPAGSPHTHTEQPSGGHGGA. The chain crosses the membrane as a helical span at residues 47-66; sequence TFLSQLIWLALAFGLLYYLM.

Belongs to the ATPase B chain family. In terms of assembly, F-type ATPases have 2 components, F(1) - the catalytic core - and F(0) - the membrane proton channel. F(1) has five subunits: alpha(3), beta(3), gamma(1), delta(1), epsilon(1). F(0) has three main subunits: a(1), b(2) and c(10-14). The alpha and beta chains form an alternating ring which encloses part of the gamma chain. F(1) is attached to F(0) by a central stalk formed by the gamma and epsilon chains, while a peripheral stalk is formed by the delta and b chains.

It localises to the cell inner membrane. Its function is as follows. F(1)F(0) ATP synthase produces ATP from ADP in the presence of a proton or sodium gradient. F-type ATPases consist of two structural domains, F(1) containing the extramembraneous catalytic core and F(0) containing the membrane proton channel, linked together by a central stalk and a peripheral stalk. During catalysis, ATP synthesis in the catalytic domain of F(1) is coupled via a rotary mechanism of the central stalk subunits to proton translocation. In terms of biological role, component of the F(0) channel, it forms part of the peripheral stalk, linking F(1) to F(0). The b'-subunit is a diverged and duplicated form of b found in plants and photosynthetic bacteria. The protein is ATP synthase subunit b 2 (atpF2) of Methylorubrum extorquens (strain PA1) (Methylobacterium extorquens).